A 1435-amino-acid chain; its full sequence is Trafficking protein particle complex subunit 8 (1435 aa).

A phosphoserine mark is found at serine 273, serine 279, and serine 309. The disordered stretch occupies residues 301–321 (QLEQSSDPSNSIDGPDHLRSA). Polar residues predominate over residues 302-312 (LEQSSDPSNSI).

This sequence belongs to the TRS85 family. As to quaternary structure, component of the multisubunit TRAPP (transport protein particle) complex, which includes TRAPPC2, TRAPPC2L, TRAPPC3, TRAPPC3L, TRAPPC4, TRAPPC5, TRAPPC8, TRAPPC9, TRAPPC10, TRAPPC11 and TRAPPC12. Interacts with TBC1D14. Interacts (via C-terminus) with TMEM131 (via C-terminus); the interaction is direct and is involved in collagen secretion.

The protein resides in the golgi apparatus. Its subcellular location is the cis-Golgi network. Its function is as follows. Plays a role in endoplasmic reticulum to Golgi apparatus trafficking at a very early stage. Maintains together with TBC1D14 the cycling pool of ATG9 required for initiation of autophagy. Involved in collagen secretion. This is Trafficking protein particle complex subunit 8 (TRAPPC8) from Homo sapiens (Human).